A 231-amino-acid polypeptide reads, in one-letter code: 5'-methylthioadenosine/S-adenosylhomocysteine nucleosidase (231 aa).

Catalysis depends on Glu-12, which acts as the Proton acceptor. Residues Gly-78, Val-153, and 174–175 each bind substrate; that span reads ME. Asp-198 functions as the Proton donor in the catalytic mechanism.

The protein belongs to the PNP/UDP phosphorylase family. MtnN subfamily.

The enzyme catalyses S-adenosyl-L-homocysteine + H2O = S-(5-deoxy-D-ribos-5-yl)-L-homocysteine + adenine. It catalyses the reaction S-methyl-5'-thioadenosine + H2O = 5-(methylsulfanyl)-D-ribose + adenine. The catalysed reaction is 5'-deoxyadenosine + H2O = 5-deoxy-D-ribose + adenine. It participates in amino-acid biosynthesis; L-methionine biosynthesis via salvage pathway; S-methyl-5-thio-alpha-D-ribose 1-phosphate from S-methyl-5'-thioadenosine (hydrolase route): step 1/2. Functionally, catalyzes the irreversible cleavage of the glycosidic bond in both 5'-methylthioadenosine (MTA) and S-adenosylhomocysteine (SAH/AdoHcy) to adenine and the corresponding thioribose, 5'-methylthioribose and S-ribosylhomocysteine, respectively. Also cleaves 5'-deoxyadenosine, a toxic by-product of radical S-adenosylmethionine (SAM) enzymes, into 5-deoxyribose and adenine. The protein is 5'-methylthioadenosine/S-adenosylhomocysteine nucleosidase of Vibrio cholerae serotype O1 (strain ATCC 39315 / El Tor Inaba N16961).